We begin with the raw amino-acid sequence, 497 residues long: Malonate-semialdehyde dehydrogenase (497 aa).

5 residues coordinate NAD(+): Phe148, Lys172, Glu175, Arg176, and Ser225. Cys280 serves as the catalytic Nucleophile. Glu382 provides a ligand contact to NAD(+).

The protein belongs to the aldehyde dehydrogenase family.

The enzyme catalyses 3-oxopropanoate + NAD(+) + CoA + H2O = hydrogencarbonate + acetyl-CoA + NADH + H(+). In terms of biological role, involved in the degradation of beta-alanine. Likely catalyzes the NAD(+)- and CoA-dependent oxidative decarboxylation of malonate semialdehyde (3-oxopropanoate) to acetyl-CoA. This Pseudomonas aeruginosa (strain ATCC 15692 / DSM 22644 / CIP 104116 / JCM 14847 / LMG 12228 / 1C / PRS 101 / PAO1) protein is Malonate-semialdehyde dehydrogenase.